A 64-amino-acid chain; its full sequence is Conotoxin Pn-B01121 (64 aa).

The signal sequence occupies residues 1 to 22 (MCCLPVFVILLLLIASAPSVDA). Positions 23–48 (LPKTKDDMSLASFHDNAKRTLQILSN) are excised as a propeptide. A Tryptophan amide modification is found at Trp-63.

It belongs to the conotoxin T superfamily. Post-translationally, contains 2 disulfide bonds that can be either 'C1-C3, C2-C4' or 'C1-C4, C2-C3', since these disulfide connectivities have been observed for conotoxins with cysteine framework V (for examples, see AC P0DQQ7 and AC P81755). As to expression, expressed by the venom duct.

The protein resides in the secreted. The chain is Conotoxin Pn-B01121 from Conus pennaceus (Feathered cone).